A 234-amino-acid chain; its full sequence is 1-(5-phosphoribosyl)-5-[(5-phosphoribosylamino)methylideneamino] imidazole-4-carboxamide isomerase (234 aa).

Asp-9 functions as the Proton acceptor in the catalytic mechanism. The active-site Proton donor is the Asp-131.

The protein belongs to the HisA/HisF family.

The protein resides in the cytoplasm. The catalysed reaction is 1-(5-phospho-beta-D-ribosyl)-5-[(5-phospho-beta-D-ribosylamino)methylideneamino]imidazole-4-carboxamide = 5-[(5-phospho-1-deoxy-D-ribulos-1-ylimino)methylamino]-1-(5-phospho-beta-D-ribosyl)imidazole-4-carboxamide. It participates in amino-acid biosynthesis; L-histidine biosynthesis; L-histidine from 5-phospho-alpha-D-ribose 1-diphosphate: step 4/9. The polypeptide is 1-(5-phosphoribosyl)-5-[(5-phosphoribosylamino)methylideneamino] imidazole-4-carboxamide isomerase (Staphylococcus aureus (strain NCTC 8325 / PS 47)).